A 66-amino-acid chain; its full sequence is Large ribosomal subunit protein bL33c (66 aa).

The protein belongs to the bacterial ribosomal protein bL33 family.

The protein localises to the plastid. The protein resides in the chloroplast. This is Large ribosomal subunit protein bL33c from Angiopteris evecta (Mule's foot fern).